We begin with the raw amino-acid sequence, 348 residues long: tRNA N6-adenosine threonylcarbamoyltransferase (348 aa).

Fe cation is bound by residues H115 and H119. Residues L138–G142, D171, G184, and N278 contribute to the substrate site. D306 is a Fe cation binding site.

Belongs to the KAE1 / TsaD family. The cofactor is Fe(2+).

The protein resides in the cytoplasm. It carries out the reaction L-threonylcarbamoyladenylate + adenosine(37) in tRNA = N(6)-L-threonylcarbamoyladenosine(37) in tRNA + AMP + H(+). Functionally, required for the formation of a threonylcarbamoyl group on adenosine at position 37 (t(6)A37) in tRNAs that read codons beginning with adenine. Is involved in the transfer of the threonylcarbamoyl moiety of threonylcarbamoyl-AMP (TC-AMP) to the N6 group of A37, together with TsaE and TsaB. TsaD likely plays a direct catalytic role in this reaction. This chain is tRNA N6-adenosine threonylcarbamoyltransferase, found in Methylibium petroleiphilum (strain ATCC BAA-1232 / LMG 22953 / PM1).